The sequence spans 380 residues: E3 ubiquitin-protein ligase PHF7 (380 aa).

A disordered region spans residues methionine 1 to threonine 23. The segment covering histidine 10–threonine 23 has biased composition (basic residues). Residues glycine 30–leucine 68 form a C2HC pre-PHD-type zinc finger. Zn(2+)-binding residues include cysteine 33, cysteine 36, histidine 58, and cysteine 61. Residues lysine 67–arginine 92 form a required for interaction and ubiquitination of the nucleosome core particle region. The PHD-type zinc-finger motif lies at lysine 96 to arginine 145. Zn(2+) is bound by residues cysteine 98, cysteine 101, cysteine 110, cysteine 115, histidine 120, cysteine 123, cysteine 141, histidine 144, cysteine 159, cysteine 162, cysteine 178, cysteine 179, histidine 185, cysteine 188, cysteine 203, cysteine 206, cysteine 247, cysteine 252, cysteine 272, cysteine 275, histidine 281, cysteine 284, cysteine 296, and cysteine 299. Residues isoleucine 150 to aspartate 306 are required for interaction with ubiquitinated UBE2D2. The RING-type; degenerate zinc-finger motif lies at cysteine 159–asparagine 207. The interval arginine 243 to leucine 300 is required for association with and ubiquitination of H3. Residues glutamate 352 to serine 367 show a composition bias toward low complexity. Residues glutamate 352 to lysine 380 form a disordered region.

As to quaternary structure, interacts with MEF2C; the interaction promotes MEF2C binding to its transcription targets. Interacts with GATA4; the interaction promotes GATA4 binding to its transcription targets. Interacts with UBE2D2; the interaction inhibits cleavage of PHF7 and promotes association of the complex with the nucleosome core particle.

Its subcellular location is the nucleus. It carries out the reaction S-ubiquitinyl-[E2 ubiquitin-conjugating enzyme]-L-cysteine + [acceptor protein]-L-lysine = [E2 ubiquitin-conjugating enzyme]-L-cysteine + N(6)-ubiquitinyl-[acceptor protein]-L-lysine.. It functions in the pathway protein modification; protein ubiquitination. Functionally, E3 ubiquitin-protein ligase which ubiquitinates histone H3 at 'Lys-14'. Required for male fertility, via inhibition of SPOP-mediated BRDT degradation when in the presence of acetylated histone H4 in early condensing spermatids. Stabilization of BRDT allows it to facilitate histone removal in early condensing spermatids and promote the progression of histone-to-protamine exchange. Promotes the expression of steroidogenesis proteins in the testes, and as a result plays a role in maintaining testosterone levels and repressing osteoclastogenesis. Promotes transcription of cardiac enhancer genes by facilitating binding of cardiac transcription factors such as MEF2C and GATA4 to target gene promoters. Ubiquitinates histone H4. Ubiquitinates histone H2A and H3 as part of the nucleosome core particle. This chain is E3 ubiquitin-protein ligase PHF7, found in Rattus norvegicus (Rat).